A 691-amino-acid polypeptide reads, in one-letter code: Calcium-binding and coiled-coil domain-containing protein 1 (691 aa).

The p300 KIX-binding stretch occupies residues 1-30 (MEESSLSRAPSRGGVNFLNVARTYIPNTKV). Residues 1–190 (MEESSLSRAP…VQELEAALAT (190 aa)) are N-terminal AD (CTNNB1 binding site). A Phosphoserine modification is found at Ser-4. The segment at 45–125 (SDWIGIFKVE…FQFREPRPMD (81 aa)) is interaction with GATA1. Coiled coils occupy residues 145–205 (KATV…YKGL), 232–339 (ELED…AELE), and 417–514 (QSME…ADEK). The C-terminal AD (CTNNB1 binding site); interaction with CCAR1 stretch occupies residues 501–691 (RKLEARLEKV…FSTQDPFTFE (191 aa)). Positions 512 to 605 (DEKWTEDAAT…DSEAEDEKSV (94 aa)) are disordered. Residues 653 to 679 (WKECPICKERFPAESDKDALEGHMDGH) form a UBZ1-type zinc finger. Zn(2+)-binding residues include Cys-656, Cys-659, His-675, and His-679.

This sequence belongs to the CALCOCO family. As to quaternary structure, part of a calphoglin complex consisting of CALCOCO1, PPA1 and PGM. Interacts with the bHLH-PAS domains of GRIP1, AHR and ARNT. Interacts with CTNNB1 via both its N- and C-terminal regions. Interacts with EP300. Interacts with CCAR1 (via N-terminus) and GATA1. In terms of tissue distribution, expressed in all tissues examined except spleen, with high levels of expression in the heart and kidney.

The protein localises to the cytoplasm. The protein resides in the nucleus. In terms of biological role, functions as a coactivator for aryl hydrocarbon and nuclear receptors (NR). Recruited to promoters through its contact with the N-terminal basic helix-loop-helix-Per-Arnt-Sim (PAS) domain of transcription factors or coactivators, such as NCOA2. During ER-activation acts synergistically in combination with other NCOA2-binding proteins, such as EP300, CREBBP and CARM1. Involved in the transcriptional activation of target genes in the Wnt/CTNNB1 pathway. Functions as a secondary coactivator in LEF1-mediated transcriptional activation via its interaction with CTNNB1. Coactivator function for nuclear receptors and LEF1/CTNNB1 involves differential utilization of two different activation regions. In association with CCAR1 enhances GATA1- and MED1-mediated transcriptional activation from the gamma-globin promoter during erythroid differentiation of K562 erythroleukemia cells. The sequence is that of Calcium-binding and coiled-coil domain-containing protein 1 (Calcoco1) from Mus musculus (Mouse).